A 113-amino-acid polypeptide reads, in one-letter code: Gas vesicle protein I2 (113 aa).

Residues 1–93 are disordered; it reads MTPTNRHTHG…TVPEQPTHAT (93 aa). A compositionally biased stretch (low complexity) spans 11–22; that stretch reads QNAQHARRNAQQ. Residues 52 to 63 are compositionally biased toward polar residues; the sequence is EQPTSDTTNPAA. The segment covering 69 to 81 has biased composition (low complexity); that stretch reads AQRTNAQNAARNA. The span at 82 to 93 shows a compositional bias: polar residues; that stretch reads HSTVPEQPTHAT.

It belongs to the gas vesicle GvpI family. In terms of assembly, gvpF to GvpM interact with each other in vitro, and may form multi-subunit complex(es). Interacts with GvpC and GvpO.

It localises to the gas vesicle. Proteins GvpF to GvpM might be involved in nucleating gas vesicle formation. A minor component of the gas vesicle. Gas vesicles are hollow, gas filled proteinaceous nanostructures found in several microbial planktonic microorganisms. They allow positioning of halobacteria at the optimal depth for growth in the poorly aerated, shallow brine pools of their habitat. In terms of biological role, expression of 2 c-vac DNA fragments containing 2 divergently transcribed regions (gvpE-gvpF-gvpG-gvpH-gvpI-gvpJ-gvpK-gvpL-gvpM and gvpA-gvpC-gvpN-gvpO) allows H.volcanii to produce gas vesicles. The sequence is that of Gas vesicle protein I2 from Halobacterium salinarum (strain ATCC 700922 / JCM 11081 / NRC-1) (Halobacterium halobium).